A 101-amino-acid chain; its full sequence is YcgL domain-containing protein ACIAD2309 (101 aa).

Residues 1 to 93 (MHCDIYRSSK…PPEGFINPSD (93 aa)) enclose the YcgL domain.

This chain is YcgL domain-containing protein ACIAD2309, found in Acinetobacter baylyi (strain ATCC 33305 / BD413 / ADP1).